Consider the following 821-residue polypeptide: Ribonuclease R (821 aa).

The RNB domain occupies 267-593 (RVDLRALPLV…LLHRAIKYLI (327 aa)). The 82-residue stretch at 652 to 733 (GEELEGVVAN…DDRQIDFELV (82 aa)) folds into the S1 motif domain. A disordered region spans residues 739 to 821 (LRGQGKTAKK…KSGKVRDKTK (83 aa)). Composition is skewed to basic and acidic residues over residues 748 to 764 (KRADEARAKAQGKKEAA) and 774 to 794 (TKSELKPQVEATRRPDSEGRS). Residues 795-814 (KPKKTKAPKKRKDQARKKSG) are compositionally biased toward basic residues.

It belongs to the RNR ribonuclease family. RNase R subfamily.

The protein localises to the cytoplasm. The enzyme catalyses Exonucleolytic cleavage in the 3'- to 5'-direction to yield nucleoside 5'-phosphates.. 3'-5' exoribonuclease that releases 5'-nucleoside monophosphates and is involved in maturation of structured RNAs. The protein is Ribonuclease R of Vibrio cholerae serotype O1 (strain ATCC 39315 / El Tor Inaba N16961).